The sequence spans 620 residues: Preterminal protein (620 aa).

The Nuclear localization signal signature appears at 356–365; that stretch reads RLPMRRRRRR. O-(5'-phospho-DNA)-serine is present on Ser545.

This sequence belongs to the adenoviridae terminal protein family. In terms of assembly, heterodimer with the polymerase; this heterodimer binds to bp 9 to 18 of the genome. Interacts with host POU2F1; POU2F1 binds to the auxiliary sequences in the inverted terminal repeats and tethers the pTP-POL heterodimer to the origin DNA thereby participating in the assembly of the pre-initiation complex (POL-TP-DBP-NFIA-POU2F1). In terms of processing, preterminal protein is used to replicate viral genome, upon genomic encapsidation it is processed first into iTP and finally into TP by adenovirus protease.

The protein resides in the host nucleus matrix. In terms of biological role, protein covalently bound to the viral DNA that acts as a primer for viral genomic replication by DNA strand displacement. Assembles on the viral origin of replication in an initiation complex with viral polymerase, DBP, host NFIA and host POU2F1/OCT1. During initiation, the polymerase covalently couples the first dCTP with Ser-580 of pTP. The terminal protein stimulates the template activity over 20 fold compared to protein-free templates. Neo-synthesized viral genomes are linked to two preterminal proteins, one for each 5' end. These new genomes are encapsidated in the nucleus, and during capsid maturation by viral protease, preterminal protein is first cleaved into intermediary (iTP), then into mature TP. May play a role in host nuclear matrix localization of genomic DNA. This chain is Preterminal protein, found in Bovine adenovirus 2 (BAdV-2).